The chain runs to 231 residues: 2-C-methyl-D-erythritol 4-phosphate cytidylyltransferase (231 aa).

It belongs to the IspD/TarI cytidylyltransferase family. IspD subfamily.

It carries out the reaction 2-C-methyl-D-erythritol 4-phosphate + CTP + H(+) = 4-CDP-2-C-methyl-D-erythritol + diphosphate. The protein operates within isoprenoid biosynthesis; isopentenyl diphosphate biosynthesis via DXP pathway; isopentenyl diphosphate from 1-deoxy-D-xylulose 5-phosphate: step 2/6. Catalyzes the formation of 4-diphosphocytidyl-2-C-methyl-D-erythritol from CTP and 2-C-methyl-D-erythritol 4-phosphate (MEP). This is 2-C-methyl-D-erythritol 4-phosphate cytidylyltransferase from Fusobacterium nucleatum subsp. nucleatum (strain ATCC 25586 / DSM 15643 / BCRC 10681 / CIP 101130 / JCM 8532 / KCTC 2640 / LMG 13131 / VPI 4355).